Reading from the N-terminus, the 136-residue chain is Large ribosomal subunit protein uL16 (136 aa).

It belongs to the universal ribosomal protein uL16 family. In terms of assembly, part of the 50S ribosomal subunit.

Its function is as follows. Binds 23S rRNA and is also seen to make contacts with the A and possibly P site tRNAs. The sequence is that of Large ribosomal subunit protein uL16 from Wigglesworthia glossinidia brevipalpis.